Here is a 232-residue protein sequence, read N- to C-terminus: Adenosylcobinamide-GDP ribazoletransferase (232 aa).

Transmembrane regions (helical) follow at residues 32-52 (PIYF…GGSF), 54-74 (NFLL…LFHF), 102-122 (VGPF…TLYL), 126-146 (PITF…LMFF), 172-192 (FFLL…VVTV), and 212-232 (DVLG…LGVV).

This sequence belongs to the CobS family. It depends on Mg(2+) as a cofactor.

The protein localises to the cell inner membrane. The catalysed reaction is alpha-ribazole + adenosylcob(III)inamide-GDP = adenosylcob(III)alamin + GMP + H(+). The enzyme catalyses alpha-ribazole 5'-phosphate + adenosylcob(III)inamide-GDP = adenosylcob(III)alamin 5'-phosphate + GMP + H(+). Its pathway is cofactor biosynthesis; adenosylcobalamin biosynthesis; adenosylcobalamin from cob(II)yrinate a,c-diamide: step 7/7. Functionally, joins adenosylcobinamide-GDP and alpha-ribazole to generate adenosylcobalamin (Ado-cobalamin). Also synthesizes adenosylcobalamin 5'-phosphate from adenosylcobinamide-GDP and alpha-ribazole 5'-phosphate. In Thermosipho melanesiensis (strain DSM 12029 / CIP 104789 / BI429), this protein is Adenosylcobinamide-GDP ribazoletransferase.